A 628-amino-acid polypeptide reads, in one-letter code: Very-long-chain aldehyde decarbonylase GL1-2 (628 aa).

A run of 5 helical transmembrane segments spans residues 37–57 (GAAP…ARGL), 131–151 (GWAI…YWAH), 191–211 (VVIG…VGLV), 299–319 (DFVF…PFVL), and 331–351 (FVLL…WCCS). The Fatty acid hydroxylase domain occupies 137-277 (LLHVLVAEPL…MPIFDLLGGT (141 aa)).

Belongs to the sterol desaturase family. As to quaternary structure, homodimer. As to expression, expressed in germinating seeds, radicals and leaves.

The protein localises to the endoplasmic reticulum membrane. The enzyme catalyses a long-chain fatty aldehyde + 2 NADPH + O2 + H(+) = a long-chain alkane + formate + 2 NADP(+) + H2O. Aldehyde decarbonylase involved in the conversion of aldehydes to alkanes. Core component of a very-long-chain alkane synthesis complex. Required for the formation of wax layers conferring cuticular permeability and drought tolerance. The polypeptide is Very-long-chain aldehyde decarbonylase GL1-2 (Oryza sativa subsp. japonica (Rice)).